The primary structure comprises 305 residues: Tyrosine recombinase XerC (305 aa).

The region spanning 4–95 (TQIQELIIKW…AIKNFYKFLE (92 aa)) is the Core-binding (CB) domain. The Tyr recombinase domain occupies 116-298 (LLPKALSEEE…SIKHLETAYV (183 aa)). Residues R159, K182, H250, R253, and H276 contribute to the active site. Y285 serves as the catalytic O-(3'-phospho-DNA)-tyrosine intermediate.

It belongs to the 'phage' integrase family. XerC subfamily. Forms a cyclic heterotetrameric complex composed of two molecules of XerC and two molecules of XerD.

The protein resides in the cytoplasm. In terms of biological role, site-specific tyrosine recombinase, which acts by catalyzing the cutting and rejoining of the recombining DNA molecules. The XerC-XerD complex is essential to convert dimers of the bacterial chromosome into monomers to permit their segregation at cell division. It also contributes to the segregational stability of plasmids. The protein is Tyrosine recombinase XerC of Rickettsia bellii (strain RML369-C).